Here is a 175-residue protein sequence, read N- to C-terminus: ATP synthase subunit delta (175 aa).

The protein belongs to the ATPase delta chain family. In terms of assembly, F-type ATPases have 2 components, F(1) - the catalytic core - and F(0) - the membrane proton channel. F(1) has five subunits: alpha(3), beta(3), gamma(1), delta(1), epsilon(1). F(0) has three main subunits: a(1), b(2) and c(10-14). The alpha and beta chains form an alternating ring which encloses part of the gamma chain. F(1) is attached to F(0) by a central stalk formed by the gamma and epsilon chains, while a peripheral stalk is formed by the delta and b chains.

Its subcellular location is the cell inner membrane. In terms of biological role, f(1)F(0) ATP synthase produces ATP from ADP in the presence of a proton or sodium gradient. F-type ATPases consist of two structural domains, F(1) containing the extramembraneous catalytic core and F(0) containing the membrane proton channel, linked together by a central stalk and a peripheral stalk. During catalysis, ATP synthesis in the catalytic domain of F(1) is coupled via a rotary mechanism of the central stalk subunits to proton translocation. Functionally, this protein is part of the stalk that links CF(0) to CF(1). It either transmits conformational changes from CF(0) to CF(1) or is implicated in proton conduction. In Xanthomonas oryzae pv. oryzae (strain MAFF 311018), this protein is ATP synthase subunit delta.